Reading from the N-terminus, the 950-residue chain is Coiled-coil domain-containing protein 80 (950 aa).

An N-terminal signal peptide occupies residues methionine 1–serine 21. 3 disordered regions span residues threonine 28–serine 64, proline 88–arginine 119, and glutamine 289–lysine 609. Composition is skewed to basic and acidic residues over residues proline 104–arginine 119 and serine 308–arginine 317. A compositionally biased stretch (low complexity) spans proline 348 to arginine 374. The span at methionine 376–glutamine 385 shows a compositional bias: polar residues. Residues serine 418 to glutamine 428 show a composition bias toward basic and acidic residues. The segment covering lysine 435–serine 454 has biased composition (polar residues). Basic and acidic residues-rich tracts occupy residues arginine 462–proline 478, proline 487–aspartate 499, and lysine 538–lysine 582. Residues lysine 545 and lysine 548 each participate in a glycyl lysine isopeptide (Lys-Gly) (interchain with G-Cter in SUMO2) cross-link. A coiled-coil region spans residues aspartate 560–lysine 587. The span at lysine 598–lysine 609 shows a compositional bias: polar residues.

The protein belongs to the CCDC80 family. Binds to various extracellular matrix proteins. In terms of processing, phosphorylated. As to expression, expressed in dermal papilla and dermal fibroblasts (at protein level). Expressed in heart, thymus, placenta, pancreas, colon, epithelium, spleen and osteoblasts.

The protein resides in the secreted. It localises to the extracellular space. Its subcellular location is the extracellular matrix. In terms of biological role, promotes cell adhesion and matrix assembly. This is Coiled-coil domain-containing protein 80 (CCDC80) from Homo sapiens (Human).